The primary structure comprises 528 residues: MAHPPRLNDDKPVIWTVSVTRLFELFRDISLEFDHLANITPIQLGFEKAVTYIRKKLANERCDAIIAAGSNGAYLKSRLSVPVILIKPSGYDVLQALAKAGKLTSSIGVVTYQETIPALVAFQKTFNLRLDQRSYITEEDARGQINELKANGTEAVVGAGLITDLAEEAGMTGIFIYSAATVRQAFSDALDMTRMSLRHNTHDATRNALRTRYVLGDMLGQSPQMEQVRQTILLYARSSAAVLIEGETGTGKELAAQAIHREYFARHDARQGKKSHPFVAVNCGAIAESLLEAELFGYEEGAFTGSRRGGRAGLFEIAHGGTLFLDEIGEMPLPLQTRLLRVLEEKEVTRVGGHQPVPVDVRVISATHCNLEEDMQQGRFRRDLFYRLSILRLQLPPLRERVADILPLAESFLKVSLAALSAPFSAALRQGLQASETVLLHYDWPGNIRELRNMMERLALFLSVEPTPDLTPQFMQLLLPELARESAKTPAPRLLTPQQALEKFNGDKTAAANYLGISRTTFWRRLKS.

The Sigma-54 factor interaction domain maps to Met218–Phe461. Ala318–Glu327 provides a ligand contact to ATP. Residues Lys508 to Lys527 constitute a DNA-binding region (H-T-H motif).

Functionally, involved in the transcriptional regulation of the propionate catabolism operon. This is Propionate catabolism operon regulatory protein (prpR) from Escherichia coli (strain K12).